A 200-amino-acid polypeptide reads, in one-letter code: Probable nicotinate-nucleotide adenylyltransferase (200 aa).

The protein belongs to the NadD family.

The enzyme catalyses nicotinate beta-D-ribonucleotide + ATP + H(+) = deamido-NAD(+) + diphosphate. It participates in cofactor biosynthesis; NAD(+) biosynthesis; deamido-NAD(+) from nicotinate D-ribonucleotide: step 1/1. In terms of biological role, catalyzes the reversible adenylation of nicotinate mononucleotide (NaMN) to nicotinic acid adenine dinucleotide (NaAD). In Clostridium botulinum (strain Eklund 17B / Type B), this protein is Probable nicotinate-nucleotide adenylyltransferase.